The primary structure comprises 324 residues: Fructose-1,6-bisphosphatase class 1 (324 aa).

Mg(2+) is bound by residues E88, D107, L109, and D110. Residues 110–113, N199, and K265 contribute to the substrate site; that span reads DGSS. E271 lines the Mg(2+) pocket.

It belongs to the FBPase class 1 family. As to quaternary structure, homotetramer. Mg(2+) serves as cofactor.

Its subcellular location is the cytoplasm. It catalyses the reaction beta-D-fructose 1,6-bisphosphate + H2O = beta-D-fructose 6-phosphate + phosphate. It participates in carbohydrate biosynthesis; gluconeogenesis. The sequence is that of Fructose-1,6-bisphosphatase class 1 from Neisseria gonorrhoeae (strain ATCC 700825 / FA 1090).